The chain runs to 135 residues: Small ribosomal subunit protein uS9 (135 aa).

Positions 102-115 are enriched in basic and acidic residues; sequence PLKTEGHLSRDPRA. The segment at 102–135 is disordered; the sequence is PLKTEGHLSRDPRAKERRKYGLKKARKAPQFSKR. Basic residues predominate over residues 116 to 135; the sequence is KERRKYGLKKARKAPQFSKR.

This sequence belongs to the universal ribosomal protein uS9 family.

The polypeptide is Small ribosomal subunit protein uS9 (Synechococcus sp. (strain CC9311)).